Here is a 162-residue protein sequence, read N- to C-terminus: SsrA-binding protein (162 aa).

The protein belongs to the SmpB family.

The protein localises to the cytoplasm. Required for rescue of stalled ribosomes mediated by trans-translation. Binds to transfer-messenger RNA (tmRNA), required for stable association of tmRNA with ribosomes. tmRNA and SmpB together mimic tRNA shape, replacing the anticodon stem-loop with SmpB. tmRNA is encoded by the ssrA gene; the 2 termini fold to resemble tRNA(Ala) and it encodes a 'tag peptide', a short internal open reading frame. During trans-translation Ala-aminoacylated tmRNA acts like a tRNA, entering the A-site of stalled ribosomes, displacing the stalled mRNA. The ribosome then switches to translate the ORF on the tmRNA; the nascent peptide is terminated with the 'tag peptide' encoded by the tmRNA and targeted for degradation. The ribosome is freed to recommence translation, which seems to be the essential function of trans-translation. This Sorangium cellulosum (strain So ce56) (Polyangium cellulosum (strain So ce56)) protein is SsrA-binding protein.